A 454-amino-acid polypeptide reads, in one-letter code: Bleomycin hydrolase (454 aa).

At Met1 the chain carries N-acetylmethionine. Active-site residues include Cys73 and His372. The residue at position 391 (Lys391) is an N6-acetyllysine. The active site involves Asn396.

The protein belongs to the peptidase C1 family. In terms of assembly, homohexamer. Interacts with NUDT12 (via ANK repeats). As to expression, expressed at relatively higher levels in the stomach, esophagus, spleen, thymus and testis, and at lower levels in the skin, lung and skeletal muscle.

It localises to the cytoplasm. The protein resides in the cytoplasmic granule. It carries out the reaction Inactivates bleomycin B2 (a cytotoxic glycometallopeptide) by hydrolysis of a carboxyamide bond of beta-aminoalanine, but also shows general aminopeptidase activity. The specificity varies somewhat with source, but amino acid arylamides of Met, Leu and Ala are preferred.. Its function is as follows. The normal physiological role of BLM hydrolase is unknown, but it catalyzes the inactivation of the antitumor drug BLM (a glycopeptide) by hydrolyzing the carboxamide bond of its B-aminoalaninamide moiety thus protecting normal and malignant cells from BLM toxicity. Binds single-stranded DNA with higher affinity than double-stranded DNA. May play an important role in the metabolism of antibiotics. This is Bleomycin hydrolase (Blmh) from Rattus norvegicus (Rat).